Here is a 330-residue protein sequence, read N- to C-terminus: Probable cytosolic iron-sulfur protein assembly protein ciao1 (330 aa).

WD repeat units lie at residues 14-53, 59-98, 103-142, 148-187, 192-231, 244-283, and 295-330; these read HPDS…WECK, GHQR…FECL, GHEN…EYEC, SHTQ…WECR, GHES…DGSS, FHGR…DPEQ, and AHNQ…YNSA.

It belongs to the WD repeat CIA1 family. Component of the CIA complex.

In terms of biological role, key component of the cytosolic iron-sulfur protein assembly (CIA) complex, a multiprotein complex that mediates the incorporation of iron-sulfur cluster into extramitochondrial Fe/S proteins. The polypeptide is Probable cytosolic iron-sulfur protein assembly protein ciao1 (ciao1) (Danio rerio (Zebrafish)).